Reading from the N-terminus, the 100-residue chain is Large ribosomal subunit protein bL21 (100 aa).

The protein belongs to the bacterial ribosomal protein bL21 family. In terms of assembly, part of the 50S ribosomal subunit. Contacts protein L20.

In terms of biological role, this protein binds to 23S rRNA in the presence of protein L20. In Ureaplasma parvum serovar 3 (strain ATCC 27815 / 27 / NCTC 11736), this protein is Large ribosomal subunit protein bL21.